The primary structure comprises 571 residues: Hemagglutinin-neuraminidase (571 aa).

The Intravirion segment spans residues 1–25; it reads MEDYSNLSLKSIPKRTCRIIFRTAT. The chain crosses the membrane as a helical span at residues 26–46; it reads ILGICTLIVLCSSILHEIIHL. The Virion surface portion of the chain corresponds to 47-571; sequence DVSSGLMDSD…IIPFLRELIP (525 aa). 3 cysteine pairs are disulfide-bonded: Cys-166/Cys-190, Cys-180/Cys-241, and Cys-232/Cys-245. An important for neuraminidase activity region spans residues 228-233; that stretch reads NRKSCS. Positions 228–233 are involved in neuraminidase activity; that stretch reads NRKSCS. N-linked (GlcNAc...) asparagine; by host glycans are attached at residues Asn-272, Asn-284, Asn-335, and Asn-341. 3 cysteine pairs are disulfide-bonded: Cys-338–Cys-459, Cys-370–Cys-380, and Cys-453–Cys-463. The N-linked (GlcNAc...) asparagine; by host glycan is linked to Asn-386. Residues 393 to 398 are sialic receptor-binding site; the sequence is GAEGRL. Asn-454, Asn-498, Asn-501, Asn-517, and Asn-522 each carry an N-linked (GlcNAc...) asparagine; by host glycan. Residues Cys-535 and Cys-546 are joined by a disulfide bond.

Belongs to the paramyxoviruses hemagglutinin-neuraminidase family. In terms of assembly, homotetramer; composed of disulfide-linked homodimers. Interacts with F protein trimer.

The protein localises to the virion membrane. It localises to the host cell membrane. It catalyses the reaction Hydrolysis of alpha-(2-&gt;3)-, alpha-(2-&gt;6)-, alpha-(2-&gt;8)- glycosidic linkages of terminal sialic acid residues in oligosaccharides, glycoproteins, glycolipids, colominic acid and synthetic substrates.. Functionally, attaches the virus to sialic acid-containing cell receptors and thereby initiating infection. Binding of HN protein to the receptor induces a conformational change that allows the F protein to trigger virion/cell membranes fusion. In terms of biological role, neuraminidase activity ensures the efficient spread of the virus by dissociating the mature virions from the neuraminic acid containing glycoproteins. This chain is Hemagglutinin-neuraminidase (HN), found in Human parainfluenza 2 virus (strain Toshiba) (HPIV-2).